The primary structure comprises 447 residues: Methyl-coenzyme M reductase I subunit beta (447 aa).

Tyr-371 serves as a coordination point for coenzyme M. Gly-373 contacts coenzyme B.

This sequence belongs to the methyl-coenzyme M reductase beta subunit family. MCR is a hexamer of two alpha, two beta, and two gamma chains, forming a dimer of heterotrimers. Coenzyme F430 serves as cofactor.

Its subcellular location is the cytoplasm. The enzyme catalyses coenzyme B + methyl-coenzyme M = methane + coenzyme M-coenzyme B heterodisulfide. It functions in the pathway one-carbon metabolism; methyl-coenzyme M reduction; methane from methyl-coenzyme M: step 1/1. Component of the methyl-coenzyme M reductase (MCR) I that catalyzes the reductive cleavage of methyl-coenzyme M (CoM-S-CH3 or 2-(methylthio)ethanesulfonate) using coenzyme B (CoB or 7-mercaptoheptanoylthreonine phosphate) as reductant which results in the production of methane and the mixed heterodisulfide of CoB and CoM (CoM-S-S-CoB). This is the final step in methanogenesis. This chain is Methyl-coenzyme M reductase I subunit beta (mcrB), found in Methanocaldococcus jannaschii (strain ATCC 43067 / DSM 2661 / JAL-1 / JCM 10045 / NBRC 100440) (Methanococcus jannaschii).